We begin with the raw amino-acid sequence, 354 residues long: 3-dehydroquinate synthase (354 aa).

NAD(+) is bound by residues 61-66 (DGESTK), 119-120 (TT), lysine 132, lysine 141, and 159-162 (FLET). 3 residues coordinate Zn(2+): glutamate 174, histidine 238, and histidine 254.

This sequence belongs to the sugar phosphate cyclases superfamily. Dehydroquinate synthase family. NAD(+) serves as cofactor. It depends on Co(2+) as a cofactor. Zn(2+) is required as a cofactor.

Its subcellular location is the cytoplasm. The enzyme catalyses 7-phospho-2-dehydro-3-deoxy-D-arabino-heptonate = 3-dehydroquinate + phosphate. It functions in the pathway metabolic intermediate biosynthesis; chorismate biosynthesis; chorismate from D-erythrose 4-phosphate and phosphoenolpyruvate: step 2/7. Catalyzes the conversion of 3-deoxy-D-arabino-heptulosonate 7-phosphate (DAHP) to dehydroquinate (DHQ). This chain is 3-dehydroquinate synthase, found in Saccharolobus solfataricus (strain ATCC 35092 / DSM 1617 / JCM 11322 / P2) (Sulfolobus solfataricus).